Reading from the N-terminus, the 393-residue chain is Aspartate aminotransferase (393 aa).

Gly38, Trp124, and Asn174 together coordinate L-aspartate. Lys237 bears the N6-(pyridoxal phosphate)lysine mark.

The protein belongs to the class-I pyridoxal-phosphate-dependent aminotransferase family. As to quaternary structure, homodimer. Requires pyridoxal 5'-phosphate as cofactor.

The protein localises to the cytoplasm. It carries out the reaction L-aspartate + 2-oxoglutarate = oxaloacetate + L-glutamate. This is Aspartate aminotransferase (aspC) from Geobacillus stearothermophilus (Bacillus stearothermophilus).